Here is a 110-residue protein sequence, read N- to C-terminus: UPF0060 membrane protein Swit_0423 (110 aa).

Helical transmembrane passes span 6-26, 29-49, 61-81, and 90-110; these read LFIFVAAALCEIGGCFAFWAW, LGKSPLWAVGGVGLLILFAWL, AFAAYGGIYICASLGWMWAVE, and LIGVLLCAVGSAVILLGPRTA.

The protein belongs to the UPF0060 family.

The protein resides in the cell inner membrane. This is UPF0060 membrane protein Swit_0423 from Rhizorhabdus wittichii (strain DSM 6014 / CCUG 31198 / JCM 15750 / NBRC 105917 / EY 4224 / RW1) (Sphingomonas wittichii).